The following is an 828-amino-acid chain: Periplasmic nitrate reductase (828 aa).

The segment at residues 1-31 (MKLSRRSFMKANAVAAAAAAAGLSVPGVARA) is a signal peptide (tat-type signal). Positions 39–95 (IKWDKAPCRFCGTGCGVLVGTQQGRVVACQGDPDAPVNRGLNCIKGYFLPKIMYGKD) constitute a 4Fe-4S Mo/W bis-MGD-type domain. Residues Cys46, Cys49, Cys53, and Cys81 each coordinate [4Fe-4S] cluster. Mo-bis(molybdopterin guanine dinucleotide)-binding positions include Lys83, Gln150, Asn175, Cys179, 212 to 219 (WGSNMAEM), 243 to 247 (STFQH), 262 to 264 (QSD), Met372, Gln376, Asn482, 508 to 509 (SD), Lys531, Asp558, and 718 to 727 (TGRVLEHWHT). Phe794 provides a ligand contact to substrate. Positions 802 and 819 each coordinate Mo-bis(molybdopterin guanine dinucleotide).

It belongs to the prokaryotic molybdopterin-containing oxidoreductase family. NasA/NapA/NarB subfamily. Component of the periplasmic nitrate reductase NapAB complex composed of NapA and NapB. The cofactor is [4Fe-4S] cluster. Mo-bis(molybdopterin guanine dinucleotide) is required as a cofactor. In terms of processing, predicted to be exported by the Tat system. The position of the signal peptide cleavage has not been experimentally proven.

The protein localises to the periplasm. The enzyme catalyses 2 Fe(II)-[cytochrome] + nitrate + 2 H(+) = 2 Fe(III)-[cytochrome] + nitrite + H2O. Functionally, catalytic subunit of the periplasmic nitrate reductase complex NapAB. Receives electrons from NapB and catalyzes the reduction of nitrate to nitrite. This is Periplasmic nitrate reductase from Salmonella agona (strain SL483).